Consider the following 385-residue polypeptide: MKLLPGVGVFGTGSSARVLVPLLRAEGFTVEALWGKTEEEAKQLAEEMNITFYTSRTDDVLLHQDVDLVCINIPPPLTRQISVKALGIGKNVVCEKAATSMDAFRMVTASRYYPQLMSLVGNVLRFLPAFVRMKQLIAEHYVGAVMICDARIYSGSLLSPSYGWICDELMGGGGLHTMGTYIVDLLTHLTGQKAEKVHGLLKTFVRQNATIRGIRHVTSDDFCFFQMLMGGGVCSTVTLNFNMPGAFVHEVMVVGSAGRLVARGADLYGQKNSAAQEELLVRDSLAVGAGLPEQGPQDVPLLYLKGMVYMVQALRQSFQGQGDRRTWDRTPVSMAASFEDGLYMQSVVDAIKRSSRSGEWETVEMLAEEPDANQNLSETLQRNNL.

An N-terminal signal peptide occupies residues 1–25; sequence MKLLPGVGVFGTGSSARVLVPLLRA.

The protein belongs to the Gfo/Idh/MocA family.

The protein resides in the secreted. The protein localises to the extracellular space. Its subcellular location is the extracellular matrix. In terms of biological role, promotes matrix assembly. The polypeptide is Glucose-fructose oxidoreductase domain-containing protein 2 (Gfod2) (Mus musculus (Mouse)).